Reading from the N-terminus, the 929-residue chain is SCY1-like protein 2 (929 aa).

The Protein kinase domain occupies 32–327; that stretch reads FDVGRHIASG…ADQMTKIPFF (296 aa). One copy of the HEAT repeat lies at 443 to 479; the sequence is DEIKNSVLPMVYRALEAPSIQIQELCLNIIPTFANLI. The stretch at 661–701 forms a coiled coil; that stretch reads ESENKEDGLQNKHKRASLTLEEKQKLAKEQEQAQKLKSQQP. At serine 677 the chain carries Phosphoserine. Positions 684 to 694 are enriched in basic and acidic residues; sequence QKLAKEQEQAQ. 2 disordered regions span residues 684-709 and 906-929; these read QKLA…VHTP and NFAQ…DLFG. Residues 695–705 show a composition bias toward low complexity; it reads KLKSQQPLKPQ. Residues 699–929 form a necessary for interaction with AP2 complex and clathrin, interaction with clathrin is necessary for its targeting to the TGN and endosomal membranes region; sequence QQPLKPQVHT…ASNDLKDLFG (231 aa). A Phosphothreonine modification is found at threonine 708. The segment covering 912 to 922 has biased composition (polar residues); sequence TTMTNSSSASN.

Belongs to the protein kinase superfamily. In terms of assembly, interacts with clathrin and AP2B1; the interaction mediates the association with the AP-2 complex. Could autophosphorylate in presence of poly-L-lysine.

It is found in the cytoplasmic vesicle. The protein resides in the clathrin-coated vesicle. Its subcellular location is the golgi apparatus. It localises to the trans-Golgi network membrane. The protein localises to the endosome membrane. Functionally, component of the AP2-containing clathrin coat that may regulate clathrin-dependent trafficking at plasma membrane, TGN and endosomal system. A possible serine/threonine-protein kinase toward the beta2-subunit of the plasma membrane adapter complex AP2 and other proteins in presence of poly-L-lysine has not been confirmed. By regulating the expression of excitatory receptors at synapses, plays an essential role in neuronal function and signaling and in brain development. The polypeptide is SCY1-like protein 2 (Homo sapiens (Human)).